Reading from the N-terminus, the 590-residue chain is Aspartate--tRNA(Asp/Asn) ligase (590 aa).

E175 provides a ligand contact to L-aspartate. The aspartate stretch occupies residues 199-202; that stretch reads QQYK. Residues R221 and H450 each coordinate L-aspartate. ATP is bound at residue 221–223; that stretch reads RDE. E484 contacts ATP. L-aspartate is bound at residue R491. 536–539 is an ATP binding site; the sequence is GVDR.

This sequence belongs to the class-II aminoacyl-tRNA synthetase family. Type 1 subfamily. In terms of assembly, homodimer.

Its subcellular location is the cytoplasm. It carries out the reaction tRNA(Asx) + L-aspartate + ATP = L-aspartyl-tRNA(Asx) + AMP + diphosphate. Its function is as follows. Aspartyl-tRNA synthetase with relaxed tRNA specificity since it is able to aspartylate not only its cognate tRNA(Asp) but also tRNA(Asn). Reaction proceeds in two steps: L-aspartate is first activated by ATP to form Asp-AMP and then transferred to the acceptor end of tRNA(Asp/Asn). The sequence is that of Aspartate--tRNA(Asp/Asn) ligase from Rhodopseudomonas palustris (strain BisA53).